A 67-amino-acid chain; its full sequence is Conotoxin TsMMSK-011 (67 aa).

Residues 1 to 22 (MMSKLGVLLTICLLLFPLTVLP) form the signal peptide. Positions 23-50 (MDGDQPADLPALRTQDIATDQSPWFDPV) are excised as a propeptide. Disulfide bonds link C53/C65, C54/C61, and C58/C64. The residue at position 63 (P63) is a 4-hydroxyproline.

The protein belongs to the conotoxin M superfamily. As to expression, expressed by the venom duct.

Its subcellular location is the secreted. The polypeptide is Conotoxin TsMMSK-011 (Conus tessulatus (Tessellate cone)).